Consider the following 356-residue polypeptide: 3-isopropylmalate dehydrogenase (356 aa).

Residues R91, R101, R129, and D223 each contribute to the substrate site. Mg(2+) contacts are provided by D223, D247, and D251. Residue 281–293 (GSAPDIAGKGIAN) coordinates NAD(+).

It belongs to the isocitrate and isopropylmalate dehydrogenases family. LeuB type 1 subfamily. In terms of assembly, homodimer. The cofactor is Mg(2+). It depends on Mn(2+) as a cofactor.

It localises to the cytoplasm. The catalysed reaction is (2R,3S)-3-isopropylmalate + NAD(+) = 4-methyl-2-oxopentanoate + CO2 + NADH. The protein operates within amino-acid biosynthesis; L-leucine biosynthesis; L-leucine from 3-methyl-2-oxobutanoate: step 3/4. In terms of biological role, catalyzes the oxidation of 3-carboxy-2-hydroxy-4-methylpentanoate (3-isopropylmalate) to 3-carboxy-4-methyl-2-oxopentanoate. The product decarboxylates to 4-methyl-2 oxopentanoate. The sequence is that of 3-isopropylmalate dehydrogenase from Ralstonia nicotianae (strain ATCC BAA-1114 / GMI1000) (Ralstonia solanacearum).